The chain runs to 530 residues: MKRTPVLIDVNGVPLRESLSYNGGGAGFGGQMAEWLPPAQSADAALLPALRLGNARADDLVRNNGIAANAVALHKDHIVGHMFLISYRPNWRWLGMRETAAKSFVDEVEAAWSEYAEGMFGEIDVEGKRTFTEFIREGVGVHAFNGEIFVQPVWDTETTQLFRTRFKAVSPKRVDTPGHGMGNRFLRAGVEVDRYGRAVAYHICEDDFPFSGSGRWERIPRELPTGRPAMLHIFEPVEDGQTRGANQFYSVMERLKMLDSLQATQLQSAIVKAMYAATIESELDTEKAFEYIAGAPQEQKDNPLINILEKFSSWYDTNNVTLGGVKIPHLFPGDDLKLQTAQDSDNGFSALEQALLRYIAAGLGVSYEQLSRDYSKVSYSSARASANESWRYFMGRRKFIAARLATQMFSCWLEEALLRGIIRPPRARFDFYQARSAWSRAEWIGAGRMAIDGLKEVQESVMRIEAGLSTYEKGLALMGEDYQDIFRQQVRESAERQKAGLSRPVWIEQAYQQQIAESRRPEEETTPRET.

This sequence belongs to the siphoviridae portal protein family. Homododecamer. Interacts with the terminase complex composed of two small and one large terminase subunits. Proteolytically cleaved by the viral protease during capsid maturation.

It localises to the virion. In terms of biological role, forms the portal vertex of the capsid. This portal plays critical roles in head assembly, genome packaging, neck/tail attachment, and genome ejection. The portal protein multimerizes as a single ring-shaped homododecamer arranged around a central channel. Binds to the terminase subunits to form the packaging machine. This is Portal protein B from Enterobacteria phage P21 (Bacteriophage 21).